We begin with the raw amino-acid sequence, 538 residues long: Putative cysteine ligase BshC (538 aa).

Residues I248–L268 are a coiled coil.

Belongs to the BshC family.

Involved in bacillithiol (BSH) biosynthesis. May catalyze the last step of the pathway, the addition of cysteine to glucosamine malate (GlcN-Mal) to generate BSH. The chain is Putative cysteine ligase BshC from Bacillus cereus (strain ATCC 14579 / DSM 31 / CCUG 7414 / JCM 2152 / NBRC 15305 / NCIMB 9373 / NCTC 2599 / NRRL B-3711).